Here is a 700-residue protein sequence, read N- to C-terminus: Putative proline-rich receptor-like protein kinase PERK6 (700 aa).

Positions 1-180 are disordered; it reads MAEGQSPENS…SGGGSNSSGN (180 aa). Residues 1–186 are Extracellular-facing; that stretch reads MAEGQSPENS…SSGNNEPNTA (186 aa). Pro residues-rich tracts occupy residues 9–19 and 29–47; these read NSPPSPTPPSP and SPPPSDSSSPSPPAPPPPD. Positions 48 to 137 are enriched in low complexity; that stretch reads DSSNGSPQPP…GNNNDNNNQN (90 aa). N-linked (GlcNAc...) asparagine glycosylation occurs at Asn-176. Residues 187–207 traverse the membrane as a helical segment; the sequence is AIVGIVAGAGLLFLVMILFCV. The Cytoplasmic segment spans residues 208–700; the sequence is CCCRKKKKKH…NNKTTPSRDH (493 aa). Residues 249–315 form a disordered region; the sequence is NLSQQYPGSN…GPSVPPPHPS (67 aa). Low complexity predominate over residues 255-265; that stretch reads PGSNGNNNWMN. Residues 266 to 286 show a composition bias toward pro residues; the sequence is SPPPPPPGSWQPSPPPPPPPV. Thr-326 carries the phosphothreonine modification. Residues 337–615 enclose the Protein kinase domain; sequence FSQSRLLGQG…VRALEGDATL (279 aa). Residues 343-351 and Lys-365 each bind ATP; that span reads LGQGGFGYV. Tyr-410 is modified (phosphotyrosine). Residue Asp-461 is the Proton acceptor of the active site. Residues Ser-465 and Ser-494 each carry the phosphoserine modification. Residues Thr-495 and Thr-500 each carry the phosphothreonine modification. Tyr-508 is modified (phosphotyrosine). Disordered regions lie at residues 616 to 642 and 659 to 700; these read DDLSEGGKAGQSSFLGRGSSSDYDSST and EYGA…SRDH. A compositionally biased stretch (polar residues) spans 689–700; the sequence is ANNNKTTPSRDH.

This sequence belongs to the protein kinase superfamily. Ser/Thr protein kinase family. As to expression, mostly expressed in flower buds.

It is found in the cell membrane. It carries out the reaction L-seryl-[protein] + ATP = O-phospho-L-seryl-[protein] + ADP + H(+). The enzyme catalyses L-threonyl-[protein] + ATP = O-phospho-L-threonyl-[protein] + ADP + H(+). The chain is Putative proline-rich receptor-like protein kinase PERK6 (PERK6) from Arabidopsis thaliana (Mouse-ear cress).